Consider the following 344-residue polypeptide: Uroporphyrinogen decarboxylase (344 aa).

Residues 27–31, Phe-46, Asp-76, Tyr-151, Ser-206, and His-319 contribute to the substrate site; that span reads RQAGR.

The protein belongs to the uroporphyrinogen decarboxylase family. In terms of assembly, homodimer.

It localises to the cytoplasm. It catalyses the reaction uroporphyrinogen III + 4 H(+) = coproporphyrinogen III + 4 CO2. Its pathway is porphyrin-containing compound metabolism; protoporphyrin-IX biosynthesis; coproporphyrinogen-III from 5-aminolevulinate: step 4/4. Its function is as follows. Catalyzes the decarboxylation of four acetate groups of uroporphyrinogen-III to yield coproporphyrinogen-III. This Halalkalibacterium halodurans (strain ATCC BAA-125 / DSM 18197 / FERM 7344 / JCM 9153 / C-125) (Bacillus halodurans) protein is Uroporphyrinogen decarboxylase.